Here is a 330-residue protein sequence, read N- to C-terminus: DNA-directed RNA polymerase subunit alpha (330 aa).

The segment at 1-229 is alpha N-terminal domain (alpha-NTD); the sequence is MKNLKFIKPF…DHFNVLVELS (229 aa). The alpha C-terminal domain (alpha-CTD) stretch occupies residues 245–330; the sequence is AHNYVLDLEI…HSVEEDKDKH (86 aa).

This sequence belongs to the RNA polymerase alpha chain family. Homodimer. The RNAP catalytic core consists of 2 alpha, 1 beta, 1 beta' and 1 omega subunit. When a sigma factor is associated with the core the holoenzyme is formed, which can initiate transcription.

It carries out the reaction RNA(n) + a ribonucleoside 5'-triphosphate = RNA(n+1) + diphosphate. DNA-dependent RNA polymerase catalyzes the transcription of DNA into RNA using the four ribonucleoside triphosphates as substrates. The polypeptide is DNA-directed RNA polymerase subunit alpha (Aster yellows witches'-broom phytoplasma (strain AYWB)).